A 419-amino-acid chain; its full sequence is 2-amino-3-ketobutyrate coenzyme A ligase, mitochondrial (419 aa).

Residues 1 to 21 (MWAGRVLHAALSRAPRESRAQ) constitute a mitochondrion transit peptide. An N6-acetyllysine; alternate modification is found at K45. N6-succinyllysine; alternate is present on K45. 134–135 (CF) serves as a coordination point for pyridoxal 5'-phosphate. H159 provides a ligand contact to substrate. Position 187 is an N6-acetyllysine; alternate (K187). An N6-succinyllysine; alternate modification is found at K187. Pyridoxal 5'-phosphate-binding positions include S206, 231 to 234 (DESH), 262 to 265 (TLGK), and 295 to 296 (SN). Residue K265 is modified to N6-(pyridoxal phosphate)lysine. An N6-succinyllysine mark is found at K326 and K368. K383 is subject to N6-acetyllysine; alternate. An N6-succinyllysine; alternate modification is found at K383. R389 contributes to the substrate binding site.

It belongs to the class-II pyridoxal-phosphate-dependent aminotransferase family. Requires pyridoxal 5'-phosphate as cofactor.

Its subcellular location is the mitochondrion. The protein resides in the nucleus. It catalyses the reaction glycine + acetyl-CoA = (2S)-2-amino-3-oxobutanoate + CoA. It functions in the pathway amino-acid degradation; L-threonine degradation via oxydo-reductase pathway; glycine from L-threonine: step 2/2. Functionally, pyridoxal phosphate (PLP) dependent enzyme, which catalyzes the cleavage of 2-amino-3-oxobutanoate to glycine and acetyl-CoA. Catalyzes the second reaction step on the main metabolic degradation pathway for L-threonine. This is 2-amino-3-ketobutyrate coenzyme A ligase, mitochondrial (GCAT) from Bos taurus (Bovine).